Here is a 125-residue protein sequence, read N- to C-terminus: Small ribosomal subunit protein eS8 (125 aa).

Positions 1–36 (MKDQGRSTRKRTGGRLHDVSKKKRHQLGREPAETTV) are disordered. Residues 7 to 26 (STRKRTGGRLHDVSKKKRHQ) show a composition bias toward basic residues. Residues 27-36 (LGREPAETTV) show a composition bias toward basic and acidic residues.

This sequence belongs to the eukaryotic ribosomal protein eS8 family. As to quaternary structure, part of the 30S ribosomal subunit.

This is Small ribosomal subunit protein eS8 from Haloquadratum walsbyi (strain DSM 16790 / HBSQ001).